The following is a 261-amino-acid chain: NAD-capped RNA hydrolase NudC (261 aa).

2 residues coordinate substrate: lysine 25 and arginine 69. Residues cysteine 98 and cysteine 101 each coordinate Zn(2+). Glutamate 111 contributes to the substrate binding site. Zn(2+) is bound by residues cysteine 116 and cysteine 119. Tyrosine 124 is a substrate binding site. Residues 125 to 248 (PQIAPCVIVA…TVARRLIEDT (124 aa)) enclose the Nudix hydrolase domain. 3 residues coordinate a divalent metal cation: alanine 158, glutamate 174, and glutamate 178. Residues 159–180 (GFVEVGETLEQAVSREVLEESN) carry the Nudix box motif. 192–199 (QPWPFPHS) contributes to the substrate binding site. Glutamate 219 provides a ligand contact to a divalent metal cation. Residue alanine 241 coordinates substrate.

The protein belongs to the Nudix hydrolase family. NudC subfamily. Homodimer. Mg(2+) is required as a cofactor. Mn(2+) serves as cofactor. It depends on Zn(2+) as a cofactor.

The catalysed reaction is a 5'-end NAD(+)-phospho-ribonucleoside in mRNA + H2O = a 5'-end phospho-adenosine-phospho-ribonucleoside in mRNA + beta-nicotinamide D-ribonucleotide + 2 H(+). It catalyses the reaction NAD(+) + H2O = beta-nicotinamide D-ribonucleotide + AMP + 2 H(+). It carries out the reaction NADH + H2O = reduced beta-nicotinamide D-ribonucleotide + AMP + 2 H(+). MRNA decapping enzyme that specifically removes the nicotinamide adenine dinucleotide (NAD) cap from a subset of mRNAs by hydrolyzing the diphosphate linkage to produce nicotinamide mononucleotide (NMN) and 5' monophosphate mRNA. The NAD-cap is present at the 5'-end of some mRNAs and stabilizes RNA against 5'-processing. Has preference for mRNAs with a 5'-end purine. Catalyzes the hydrolysis of a broad range of dinucleotide pyrophosphates. This is NAD-capped RNA hydrolase NudC from Yersinia enterocolitica serotype O:8 / biotype 1B (strain NCTC 13174 / 8081).